The sequence spans 105 residues: Thioredoxin (105 aa).

One can recognise a Thioredoxin domain in the interval 2–103 (VKQIESKSAF…KEKLEATIKG (102 aa)). Lys3 carries the post-translational modification N6-acetyllysine. The residue at position 8 (Lys8) is an N6-succinyllysine. Active-site nucleophile residues include Cys32 and Cys35. A disulfide bond links Cys32 and Cys35. N6-acetyllysine is present on Lys39. 2 positions are modified to S-nitrosocysteine: Cys62 and Cys69. An S-nitrosocysteine; alternate modification is found at Cys73. Lys94 carries the post-translational modification N6-acetyllysine; alternate. Position 94 is an N6-succinyllysine; alternate (Lys94).

It belongs to the thioredoxin family. Homodimer; disulfide-linked. Interacts with TXNIP through the redox-active site. Interacts with MAP3K5 and CASP3. Interacts with APEX1; the interaction stimulates the FOS/JUN AP-1 DNA-binding activity in a redox-dependent manner. In terms of processing, in the fully reduced protein, both Cys-69 and Cys-73 are nitrosylated in response to nitric oxide (NO). When two disulfide bonds are present in the protein, only Cys-73 is nitrosylated. Cys-73 can serve as donor for nitrosylation of target proteins.

The protein resides in the nucleus. The protein localises to the cytoplasm. It is found in the secreted. Functionally, participates in various redox reactions through the reversible oxidation of its active center dithiol to a disulfide and catalyzes dithiol-disulfide exchange reactions. Plays a role in the reversible S-nitrosylation of cysteine residues in target proteins, and thereby contributes to the response to intracellular nitric oxide. Nitrosylates the active site Cys of CASP3 in response to nitric oxide (NO), and thereby inhibits caspase-3 activity. Induces the FOS/JUN AP-1 DNA binding activity in ionizing radiation (IR) cells through its oxidation/reduction status and stimulates AP-1 transcriptional activity. This Equus caballus (Horse) protein is Thioredoxin (TXN).